A 90-amino-acid chain; its full sequence is uncharacterized protein (90 aa).

Belongs to the barstar family.

This is an uncharacterized protein from Escherichia coli O157:H7.